Here is a 292-residue protein sequence, read N- to C-terminus: ATP synthase gamma chain (292 aa).

It belongs to the ATPase gamma chain family. As to quaternary structure, F-type ATPases have 2 components, CF(1) - the catalytic core - and CF(0) - the membrane proton channel. CF(1) has five subunits: alpha(3), beta(3), gamma(1), delta(1), epsilon(1). CF(0) has three main subunits: a, b and c.

The protein resides in the cell inner membrane. In terms of biological role, produces ATP from ADP in the presence of a proton gradient across the membrane. The gamma chain is believed to be important in regulating ATPase activity and the flow of protons through the CF(0) complex. This Chlorobaculum parvum (strain DSM 263 / NCIMB 8327) (Chlorobium vibrioforme subsp. thiosulfatophilum) protein is ATP synthase gamma chain.